We begin with the raw amino-acid sequence, 148 residues long: Deoxyuridine 5'-triphosphate nucleotidohydrolase (148 aa).

Substrate-binding positions include arginine 67 to glycine 69, asparagine 80, leucine 84 to aspartate 86, and methionine 94.

This sequence belongs to the dUTPase family. Requires Mg(2+) as cofactor.

The enzyme catalyses dUTP + H2O = dUMP + diphosphate + H(+). The protein operates within pyrimidine metabolism; dUMP biosynthesis; dUMP from dCTP (dUTP route): step 2/2. This enzyme is involved in nucleotide metabolism: it produces dUMP, the immediate precursor of thymidine nucleotides and it decreases the intracellular concentration of dUTP so that uracil cannot be incorporated into DNA. The polypeptide is Deoxyuridine 5'-triphosphate nucleotidohydrolase (Paraburkholderia phymatum (strain DSM 17167 / CIP 108236 / LMG 21445 / STM815) (Burkholderia phymatum)).